A 245-amino-acid polypeptide reads, in one-letter code: UDP-2,3-diacylglucosamine hydrolase (245 aa).

Positions 8, 10, 41, 80, and 115 each coordinate Mn(2+). 80 to 81 serves as a coordination point for substrate; the sequence is NR. 5 residues coordinate substrate: aspartate 123, serine 161, lysine 165, lysine 168, and histidine 196. Mn(2+) contacts are provided by histidine 196 and histidine 198.

This sequence belongs to the LpxH family. Requires Mn(2+) as cofactor.

Its subcellular location is the cell inner membrane. It carries out the reaction UDP-2-N,3-O-bis[(3R)-3-hydroxytetradecanoyl]-alpha-D-glucosamine + H2O = 2-N,3-O-bis[(3R)-3-hydroxytetradecanoyl]-alpha-D-glucosaminyl 1-phosphate + UMP + 2 H(+). The protein operates within glycolipid biosynthesis; lipid IV(A) biosynthesis; lipid IV(A) from (3R)-3-hydroxytetradecanoyl-[acyl-carrier-protein] and UDP-N-acetyl-alpha-D-glucosamine: step 4/6. In terms of biological role, hydrolyzes the pyrophosphate bond of UDP-2,3-diacylglucosamine to yield 2,3-diacylglucosamine 1-phosphate (lipid X) and UMP by catalyzing the attack of water at the alpha-P atom. Involved in the biosynthesis of lipid A, a phosphorylated glycolipid that anchors the lipopolysaccharide to the outer membrane of the cell. The polypeptide is UDP-2,3-diacylglucosamine hydrolase (Psychromonas ingrahamii (strain DSM 17664 / CCUG 51855 / 37)).